Reading from the N-terminus, the 107-residue chain is Large ribosomal subunit protein uL24 (107 aa).

The protein belongs to the universal ribosomal protein uL24 family. In terms of assembly, part of the 50S ribosomal subunit.

One of two assembly initiator proteins, it binds directly to the 5'-end of the 23S rRNA, where it nucleates assembly of the 50S subunit. Functionally, one of the proteins that surrounds the polypeptide exit tunnel on the outside of the subunit. The sequence is that of Large ribosomal subunit protein uL24 from Streptomyces avermitilis (strain ATCC 31267 / DSM 46492 / JCM 5070 / NBRC 14893 / NCIMB 12804 / NRRL 8165 / MA-4680).